The sequence spans 275 residues: Adaptin ear-binding coat-associated protein 1 (275 aa).

The segment at 170 to 191 is disordered; sequence KGGASKPRTARGGGLSLLPPPP. R180 carries the post-translational modification Omega-N-methylarginine. A Phosphothreonine modification is found at T211. 2 consecutive short sequence motifs (WXXF motif) follow at residues 252–255 and 272–275; these read WGDF and WVQF. Positions 254–275 are disordered; the sequence is DFSTASSSVPNQAPQPSNWVQF. Polar residues predominate over residues 256-275; the sequence is STASSSVPNQAPQPSNWVQF.

It belongs to the NECAP family. Interacts with AP1G1 and AP2A1 components of the adapter protein complexes AP-1 and AP-2. Interacts with the GAE domain proteins GGA1, GGA2 and GGA3.

The protein localises to the cytoplasmic vesicle. It is found in the clathrin-coated vesicle membrane. Its subcellular location is the cell membrane. Involved in endocytosis. The chain is Adaptin ear-binding coat-associated protein 1 (NECAP1) from Homo sapiens (Human).